The primary structure comprises 210 residues: Histidine biosynthesis bifunctional protein HisIE (210 aa).

Residues 1–121 (MNPASPFATL…DAQEESQMVW (121 aa)) are phosphoribosyl-AMP cyclohydrolase. Residues 122-210 (LHQLEQLLAE…VINKLKERHK (89 aa)) are phosphoribosyl-ATP pyrophosphohydrolase.

This sequence in the N-terminal section; belongs to the PRA-CH family. In the C-terminal section; belongs to the PRA-PH family.

It localises to the cytoplasm. It carries out the reaction 1-(5-phospho-beta-D-ribosyl)-ATP + H2O = 1-(5-phospho-beta-D-ribosyl)-5'-AMP + diphosphate + H(+). The enzyme catalyses 1-(5-phospho-beta-D-ribosyl)-5'-AMP + H2O = 1-(5-phospho-beta-D-ribosyl)-5-[(5-phospho-beta-D-ribosylamino)methylideneamino]imidazole-4-carboxamide. It functions in the pathway amino-acid biosynthesis; L-histidine biosynthesis; L-histidine from 5-phospho-alpha-D-ribose 1-diphosphate: step 2/9. The protein operates within amino-acid biosynthesis; L-histidine biosynthesis; L-histidine from 5-phospho-alpha-D-ribose 1-diphosphate: step 3/9. This Vibrio cholerae serotype O1 (strain ATCC 39315 / El Tor Inaba N16961) protein is Histidine biosynthesis bifunctional protein HisIE (hisI).